The sequence spans 304 residues: Murein tetrapeptide carboxypeptidase (304 aa).

The active-site Nucleophile is serine 106. Catalysis depends on charge relay system residues glutamate 200 and histidine 270.

This sequence belongs to the peptidase S66 family.

Its subcellular location is the cytoplasm. The catalysed reaction is N-acetyl-D-glucosaminyl-N-acetylmuramoyl-L-alanyl-meso-2,6-diaminoheptanedioyl-D-alanine + H2O = N-acetyl-D-glucosaminyl-N-acetylmuramoyl-L-alanyl-meso-2,6-diaminoheptanedioate + D-alanine. It functions in the pathway cell wall biogenesis; peptidoglycan recycling. Functionally, releases the terminal D-alanine residue from the cytoplasmic tetrapeptide recycling product L-Ala-gamma-D-Glu-meso-Dap-D-Ala. Can also cleave D-Ala from murein derivatives containing the tetrapeptide, i.e. MurNAc-tetrapeptide, UDP-MurNAc-tetrapeptide, GlcNAc-MurNAc-tetrapeptide, and GlcNAc-anhMurNAc-tetrapeptide. Does not act on murein sacculi or cross-linked muropeptides. The tripeptides produced by the LcdA reaction can then be reused as peptidoglycan building blocks; LcdA is thereby involved in murein recycling. This is Murein tetrapeptide carboxypeptidase (ldcA) from Escherichia coli O157:H7.